Consider the following 86-residue polypeptide: MYFLKIRSELDSKFEKLAKKNKKQLEIILAKADEILENPHRYKNLKAPMNHLKRVHIDKHFVLVFSIDEESRSVTLEDYDHHDKIY.

This sequence to M.jannaschii MJ1173.

This is an uncharacterized protein from Methanosarcina mazei (strain ATCC BAA-159 / DSM 3647 / Goe1 / Go1 / JCM 11833 / OCM 88) (Methanosarcina frisia).